Here is a 243-residue protein sequence, read N- to C-terminus: CD48 antigen (243 aa).

Positions 1–26 (MCSRGWDSCLALELLLLPLSLLVTSI) are cleaved as a signal peptide. Ig-like C2-type domains follow at residues 29–127 (HLVH…KLQV) and 132–212 (PKPV…VCLS). Residues asparagine 40, asparagine 44, asparagine 104, asparagine 162, and asparagine 189 are each glycosylated (N-linked (GlcNAc...) asparagine). Cysteines 154 and 196 form a disulfide. Serine 220 carries the GPI-anchor amidated serine lipid modification. A propeptide spans 221–243 (FGVEWIASWLVVTVPTILGLLLT) (removed in mature form).

In terms of assembly, interacts with CD2. Interacts with CD244; this interaction is possible not only on different cells (trans interaction) but also on the same cell (cis interaction). Interacts with LCK. In terms of tissue distribution, widely expressed on all hematopoietic cells.

Its subcellular location is the cell membrane. It is found in the membrane raft. The protein localises to the secreted. In terms of biological role, glycosylphosphatidylinositol (GPI)-anchored cell surface glycoprotein that interacts via its N-terminal immunoglobulin domain with cell surface receptors including CD244/2B4 or CD2 to regulate immune cell function and activation. Participates in T-cell signaling transduction by associating with CD2 and efficiently bringing the Src family protein kinase LCK and LAT to the TCR/CD3 complex. In turn, promotes LCK phosphorylation and subsequent activation. Induces the phosphorylation of the cytoplasmic immunoreceptortyrosine switch motifs (ITSMs) of CD244 initiating a series of signaling events that leads to the generation of the immunological synapse and the directed release of cytolytic granules containing perforin and granzymes by T-lymphocytes and NK-cells. In Homo sapiens (Human), this protein is CD48 antigen (CD48).